The primary structure comprises 99 residues: RNA-binding protein Hfq (99 aa).

The region spanning 10–71 (DLFLNQLRKE…ISSILPSKPI (62 aa)) is the Sm domain. Residues 77 to 99 (VQNSQVQNTASQQSNNNQNQESK) are disordered.

The protein belongs to the Hfq family. As to quaternary structure, homohexamer.

In terms of biological role, RNA chaperone that binds small regulatory RNA (sRNAs) and mRNAs to facilitate mRNA translational regulation in response to envelope stress, environmental stress and changes in metabolite concentrations. Also binds with high specificity to tRNAs. The protein is RNA-binding protein Hfq of Caldicellulosiruptor saccharolyticus (strain ATCC 43494 / DSM 8903 / Tp8T 6331).